The primary structure comprises 630 residues: tRNA uridine 5-carboxymethylaminomethyl modification enzyme MnmG (630 aa).

Residue 13–18 (GGGHAG) participates in FAD binding. 273–287 (GPRYCPSIEDKIHRF) serves as a coordination point for NAD(+).

This sequence belongs to the MnmG family. In terms of assembly, homodimer. Heterotetramer of two MnmE and two MnmG subunits. The cofactor is FAD.

The protein resides in the cytoplasm. Functionally, NAD-binding protein involved in the addition of a carboxymethylaminomethyl (cmnm) group at the wobble position (U34) of certain tRNAs, forming tRNA-cmnm(5)s(2)U34. This Pseudomonas aeruginosa (strain ATCC 15692 / DSM 22644 / CIP 104116 / JCM 14847 / LMG 12228 / 1C / PRS 101 / PAO1) protein is tRNA uridine 5-carboxymethylaminomethyl modification enzyme MnmG.